We begin with the raw amino-acid sequence, 488 residues long: Transmembrane protein 39A (488 aa).

2 N-linked (GlcNAc...) asparagine glycosylation sites follow: asparagine 31 and asparagine 39. 8 helical membrane passes run serine 72–isoleucine 92, threonine 110–alanine 130, valine 154–leucine 174, serine 182–phenylalanine 202, glutamate 287–valine 307, cysteine 319–proline 339, leucine 420–leucine 440, and asparagine 446–leucine 466.

Belongs to the TMEM39 family. As to quaternary structure, interacts with SACM1L, SEC23A and SEC24A. (Microbial infection) Interacts with encephalomyocarditis virus (EMCV) major capsid proteins VP1 and VP2. Up-regulated in brain tumor glioblastoma multiforme cells (at protein level).

It is found in the endoplasmic reticulum membrane. Its function is as follows. Regulates autophagy by controlling the spatial distribution and levels of the intracellular phosphatidylinositol 4-phosphate (PtdIns(4)P) pools. Modulates (PtdIns(4)P) levels by regulating the ER-to-Golgi trafficking of the phosphatidylinositide phosphatase SACM1L. Functionally, (Microbial infection) Positively regulates the replication of encephalomyocarditis virus (EMCV) via autophagy-dependent pathway. This Homo sapiens (Human) protein is Transmembrane protein 39A (TMEM39A).